Consider the following 57-residue polypeptide: UPF0509 protein YciZ (57 aa).

Belongs to the UPF0509 family.

This is UPF0509 protein YciZ (yciZ) from Shigella flexneri.